Consider the following 148-residue polypeptide: MELILLEKVANLGNLGDKVKVKAGYGRNFLLPFGKATVANAANLAAFEERRAELEKAAADRKSSAESRAAQLAELEVTITATAGDEGKLFGSIGTHDIADALTASGVEVAKAEVRLPNGTIRQVGEYDVAVHLHSDVEATVRVVVVAA.

This sequence belongs to the bacterial ribosomal protein bL9 family.

Functionally, binds to the 23S rRNA. This is Large ribosomal subunit protein bL9 from Pseudomonas putida (strain W619).